Reading from the N-terminus, the 532-residue chain is MSNDGSKILNYTPVSKIDEIVEISRNFFFEKQLKLSHENNPRKKDLEFRQLQLKKLYYAVKDHEEELIDAMYKDFHRNKIESVLNETTKLMNDILHLIEILPKLIKPRRVSDSSPPFMFGKTIVEKISRGSVLIIAPFNFPLLLAFAPLAAALAAGNTIVLKPSELTPHTAVVMENLLTTAGFPDGLIQVVQGAIDETTRLLDCGKFDLIFYTGSPRVGSIVAEKAAKSLTPCVLELGGKSPTFITENFKASNIKIALKRIFFGAFGNSGQICVSPDYLLVHKSIYPKVIKECESVLNEFYPSFDEQTDFTRMIHEPAYKKAVASINSTNGSKIVPSKISINSDTEDLCLVPPTIVYNIGWDDPLMKQENFAPVLPIIEYEDLDETINKIIEEHDTPLVQYIFSDSQTEINRILTRLRSGDCVVGDTVIHVGITDAPFGGIGTSGYGNYGGYYGFNTFSHERTIFKQPYWNDFTLFMRYPPNSAQKEKLVRFAMERKPWFDRNGNNKWGLRQYFSLSAAVILISTIYAHCSS.

S111 is subject to Phosphoserine. A helical transmembrane segment spans residues I134–A152. Residue G214–G219 participates in NAD(+) binding. Residues E236 and C273 contribute to the active site.

It belongs to the aldehyde dehydrogenase family.

Its subcellular location is the lipid droplet. It localises to the mitochondrion outer membrane. The protein resides in the endosome membrane. The protein localises to the cytoplasmic granule membrane. It catalyses the reaction an aldehyde + NAD(+) + H2O = a carboxylate + NADH + 2 H(+). It carries out the reaction hexadecanoate + NADH + 2 H(+) = hexadecanal + NAD(+) + H2O. The catalysed reaction is 4-hydroxybenzaldehyde + NAD(+) + H2O = 4-hydroxybenzoate + NADH + 2 H(+). In terms of biological role, catalyzes the oxidation of long-chain aliphatic aldehydes to fatty acids. Responsible for conversion of the sphingosine 1-phosphate (S1P) degradation product hexadecenal to hexadecenoic acid. Involved in coenzyme Q (CoQ) biosynthesis, catalyzing the last step in the tyrosine to 4-hydroxybenzoate (4-HB) pathway. Oxidizes 4-hydroxybenzaldehyde (4-Hbz) to 4-HB, the aromatic precursor for coenzyme Q. The protein is Fatty aldehyde dehydrogenase HFD1 (HFD1) of Saccharomyces cerevisiae (strain ATCC 204508 / S288c) (Baker's yeast).